The sequence spans 362 residues: Protein RecA (362 aa).

Residue 77–84 coordinates ATP; that stretch reads GPESSGKT.

The protein belongs to the RecA family.

It localises to the cytoplasm. Functionally, can catalyze the hydrolysis of ATP in the presence of single-stranded DNA, the ATP-dependent uptake of single-stranded DNA by duplex DNA, and the ATP-dependent hybridization of homologous single-stranded DNAs. It interacts with LexA causing its activation and leading to its autocatalytic cleavage. This Allorhizobium ampelinum (strain ATCC BAA-846 / DSM 112012 / S4) (Agrobacterium vitis (strain S4)) protein is Protein RecA.